A 199-amino-acid polypeptide reads, in one-letter code: Dephospho-CoA kinase (199 aa).

Residues 3–199 (VIGLTGSIGM…AAAKMPRRRS (197 aa)) form the DPCK domain. Residue 11-16 (GMGKST) coordinates ATP.

Belongs to the CoaE family.

The protein resides in the cytoplasm. It catalyses the reaction 3'-dephospho-CoA + ATP = ADP + CoA + H(+). Its pathway is cofactor biosynthesis; coenzyme A biosynthesis; CoA from (R)-pantothenate: step 5/5. Functionally, catalyzes the phosphorylation of the 3'-hydroxyl group of dephosphocoenzyme A to form coenzyme A. The chain is Dephospho-CoA kinase from Nitrobacter winogradskyi (strain ATCC 25391 / DSM 10237 / CIP 104748 / NCIMB 11846 / Nb-255).